The sequence spans 314 residues: Acetyl-coenzyme A carboxylase carboxyl transferase subunit alpha (314 aa).

A CoA carboxyltransferase C-terminal domain is found at Glu32–Glu289.

The protein belongs to the AccA family. Acetyl-CoA carboxylase is a heterohexamer composed of biotin carboxyl carrier protein (AccB), biotin carboxylase (AccC) and two subunits each of ACCase subunit alpha (AccA) and ACCase subunit beta (AccD).

The protein localises to the cytoplasm. The enzyme catalyses N(6)-carboxybiotinyl-L-lysyl-[protein] + acetyl-CoA = N(6)-biotinyl-L-lysyl-[protein] + malonyl-CoA. Its pathway is lipid metabolism; malonyl-CoA biosynthesis; malonyl-CoA from acetyl-CoA: step 1/1. Its function is as follows. Component of the acetyl coenzyme A carboxylase (ACC) complex. First, biotin carboxylase catalyzes the carboxylation of biotin on its carrier protein (BCCP) and then the CO(2) group is transferred by the carboxyltransferase to acetyl-CoA to form malonyl-CoA. In Staphylococcus epidermidis (strain ATCC 35984 / DSM 28319 / BCRC 17069 / CCUG 31568 / BM 3577 / RP62A), this protein is Acetyl-coenzyme A carboxylase carboxyl transferase subunit alpha.